The sequence spans 857 residues: Bifunctional levopimaradiene synthase, chloroplastic (857 aa).

Residues 1–33 (MALPSSSLSSQIHTGATTQCIPHFHGSLNAGTS) constitute a chloroplast transit peptide. Lys-257 provides a ligand contact to substrate. Mg(2+) is bound by residues Asp-390 and Asp-392. The DXDD motif signature appears at 390–393 (DIDD). Lys-477 lines the substrate pocket. Positions 609, 613, 753, 757, and 761 each coordinate Mg(2+). The short motif at 609 to 613 (DDLYD) is the DDXXD motif element.

The protein belongs to the terpene synthase family. Tpsd subfamily. Mg(2+) is required as a cofactor.

The protein resides in the plastid. Its subcellular location is the chloroplast. It catalyses the reaction (2E,6E,10E)-geranylgeranyl diphosphate = (+)-copalyl diphosphate. The enzyme catalyses (+)-copalyl diphosphate = abieta-7,13-diene + diphosphate. The catalysed reaction is (+)-copalyl diphosphate = abieta-8(14),12-diene + diphosphate. It carries out the reaction (+)-copalyl diphosphate = neoabietadiene + diphosphate. It participates in terpene metabolism; oleoresin biosynthesis. Involved in defensive oleoresin formation in conifers in response to insect attack or other injury. Involved in diterpene (C20) olefins biosynthesis. Bifunctional enzyme that catalyzes two sequential cyclizations of geranylgeranyl diphosphate (GGPP) to levopimaradiene. Levopimaradiene is the major products of the enzyme with abietadiene and neoabietadiene. No activity with farnesyl diphosphate (FPP) as substrate. This Pinus banksiana (Jack pine) protein is Bifunctional levopimaradiene synthase, chloroplastic.